The sequence spans 282 residues: Putative peroxisomal biogenesis factor 19 (282 aa).

Positions 73-95 (QEEAMKKAGADPSEGEGEQPLDP) are disordered. At cysteine 279 the chain carries Cysteine methyl ester. Cysteine 279 carries the S-farnesyl cysteine lipid modification. The propeptide at 280-282 (SIM) is removed in mature form.

Belongs to the peroxin-19 family.

Its subcellular location is the peroxisome. This Caenorhabditis elegans protein is Putative peroxisomal biogenesis factor 19 (prx-19).